A 216-amino-acid polypeptide reads, in one-letter code: Adenylate kinase (216 aa).

10–15 (GAGKGT) is a binding site for ATP. Residues 30 to 59 (STGDIFRYNIKQGTELGKKAKSYMDQGLLV) are NMP. Residues Thr31, Arg36, 57–59 (LLV), 85–88 (GFPR), and Gln92 contribute to the AMP site. Residues 126–163 (GRRICRECGATFHVQYNPSTKGALCDQCGGELYQRDDD) are LID. Arg127 is an ATP binding site. Zn(2+)-binding residues include Cys130 and Cys133. An ATP-binding site is contributed by 136 to 137 (TF). Positions 150 and 153 each coordinate Zn(2+). AMP-binding residues include Arg160 and Arg171. Lys199 serves as a coordination point for ATP.

This sequence belongs to the adenylate kinase family. Monomer.

The protein localises to the cytoplasm. The catalysed reaction is AMP + ATP = 2 ADP. Its pathway is purine metabolism; AMP biosynthesis via salvage pathway; AMP from ADP: step 1/1. Catalyzes the reversible transfer of the terminal phosphate group between ATP and AMP. Plays an important role in cellular energy homeostasis and in adenine nucleotide metabolism. The protein is Adenylate kinase of Alkaliphilus oremlandii (strain OhILAs) (Clostridium oremlandii (strain OhILAs)).